We begin with the raw amino-acid sequence, 89 residues long: Protein FAM25A (89 aa).

Belongs to the FAM25 family.

The protein is Protein FAM25A of Homo sapiens (Human).